The chain runs to 460 residues: Argininosuccinate lyase (460 aa).

It belongs to the lyase 1 family. Argininosuccinate lyase subfamily.

Its subcellular location is the cytoplasm. The catalysed reaction is 2-(N(omega)-L-arginino)succinate = fumarate + L-arginine. The protein operates within amino-acid biosynthesis; L-arginine biosynthesis; L-arginine from L-ornithine and carbamoyl phosphate: step 3/3. The sequence is that of Argininosuccinate lyase from Streptococcus mutans serotype c (strain ATCC 700610 / UA159).